The sequence spans 156 residues: Endogenous retrovirus group K member 25 Pro protein (156 aa).

Positions 21–96 constitute a Peptidase A2 domain; sequence FEGLVDTGAD…IPLNLWGRDL (76 aa). Asp26 is an active-site residue. Positions 111–156 constitute a G-patch domain; sequence YSPTSQKIMTKMGYIPGKGLGKNEDGIKIPVEAKINQKREGIGYPF.

The protein belongs to the peptidase A2 family. HERV class-II K(HML-2) subfamily. Active as a homodimer. In terms of processing, autoproteolytically processed at the N-terminus. Expected C-terminal autoprocessing not detected. The sequence shown is that of the processed Pro protein.

It catalyses the reaction Processing at the authentic HIV-1 PR recognition site and release of the mature p17 matrix and the p24 capsid protein, as a result of the cleavage of the -SQNY-|-PIVQ- cleavage site.. Its function is as follows. Retroviral proteases have roles in processing of the primary translation products and the maturation of the viral particle. Endogenous Pro proteins may have kept, lost or modified their original function during evolution. This endogenous protein has retained most of the characteristics of retroviral proteases. The protein is Endogenous retrovirus group K member 25 Pro protein (ERVK-25) of Homo sapiens (Human).